Here is a 173-residue protein sequence, read N- to C-terminus: NADH-ubiquinone oxidoreductase chain 6 (173 aa).

6 consecutive transmembrane segments (helical) span residues 1–21 (MTYFVLFLGLCFVLGGLAVAS), 27–47 (YGVVGLVLASVAGCGWLLSLG), 48–68 (VSFVSLVLFMVYLGGMLVVFV), 85–105 (WGVVGYGVGFVVVLVAGLIVG), 106–126 (GSIGSLDFGVVTVDSVGMFSV), and 139–159 (CGVGMLLVAGWGLLLTLFVVL).

This sequence belongs to the complex I subunit 6 family.

It localises to the mitochondrion membrane. It catalyses the reaction a ubiquinone + NADH + 5 H(+)(in) = a ubiquinol + NAD(+) + 4 H(+)(out). Functionally, core subunit of the mitochondrial membrane respiratory chain NADH dehydrogenase (Complex I) that is believed to belong to the minimal assembly required for catalysis. Complex I functions in the transfer of electrons from NADH to the respiratory chain. The immediate electron acceptor for the enzyme is believed to be ubiquinone. The polypeptide is NADH-ubiquinone oxidoreductase chain 6 (MT-ND6) (Aethia psittacula (Parakeet auklet)).